A 308-amino-acid chain; its full sequence is Aspartate carbamoyltransferase catalytic subunit (308 aa).

Carbamoyl phosphate is bound by residues arginine 57 and threonine 58. Residue lysine 86 coordinates L-aspartate. Carbamoyl phosphate contacts are provided by arginine 107, histidine 135, and glutamine 138. Residues arginine 167 and arginine 228 each contribute to the L-aspartate site. Positions 267 and 268 each coordinate carbamoyl phosphate.

This sequence belongs to the aspartate/ornithine carbamoyltransferase superfamily. ATCase family. Heterooligomer of catalytic and regulatory chains.

It catalyses the reaction carbamoyl phosphate + L-aspartate = N-carbamoyl-L-aspartate + phosphate + H(+). It functions in the pathway pyrimidine metabolism; UMP biosynthesis via de novo pathway; (S)-dihydroorotate from bicarbonate: step 2/3. Its function is as follows. Catalyzes the condensation of carbamoyl phosphate and aspartate to form carbamoyl aspartate and inorganic phosphate, the committed step in the de novo pyrimidine nucleotide biosynthesis pathway. This Methanosarcina barkeri (strain Fusaro / DSM 804) protein is Aspartate carbamoyltransferase catalytic subunit.